The sequence spans 678 residues: 1,4-alpha-glucan-branching enzyme (678 aa).

2 residues coordinate (1,4-alpha-D-glucosyl)n: tryptophan 88 and lysine 124. The active-site Nucleophile is the aspartate 338. The active-site Proton donor is the glutamate 391.

It belongs to the glycosyl hydrolase 13 family. GlgB subfamily. As to quaternary structure, monomer.

It catalyses the reaction Transfers a segment of a (1-&gt;4)-alpha-D-glucan chain to a primary hydroxy group in a similar glucan chain.. It participates in glycan biosynthesis; glycogen biosynthesis. Functionally, glycogen-branching enzyme participates in the glycogen biosynthetic process along with glycogenin and glycogen synthase. Generates alpha-1,6-glucosidic branches from alpha-1,4-linked glucose chains, to increase solubility of the glycogen polymer. The polypeptide is 1,4-alpha-glucan-branching enzyme (glgB) (Dictyostelium discoideum (Social amoeba)).